The chain runs to 1485 residues: Chromosome partition protein MukB (1485 aa).

Glycine 34–serine 41 contacts ATP. Coiled coils occupy residues leucine 337–glutamine 480 and glutamine 509–leucine 605. Residues proline 666–arginine 783 are flexible hinge. Coiled coils occupy residues glutamate 835 to histidine 915 and glycine 977 to glycine 1116.

The protein belongs to the SMC family. MukB subfamily. Homodimerization via its hinge domain. Binds to DNA via its C-terminal region. Interacts, and probably forms a ternary complex, with MukE and MukF via its C-terminal region. The complex formation is stimulated by calcium or magnesium. Interacts with tubulin-related protein FtsZ.

It is found in the cytoplasm. It localises to the nucleoid. Functionally, plays a central role in chromosome condensation, segregation and cell cycle progression. Functions as a homodimer, which is essential for chromosome partition. Involved in negative DNA supercoiling in vivo, and by this means organize and compact chromosomes. May achieve or facilitate chromosome segregation by condensation DNA from both sides of a centrally located replisome during cell division. The protein is Chromosome partition protein MukB of Yersinia pseudotuberculosis serotype IB (strain PB1/+).